We begin with the raw amino-acid sequence, 76 residues long: MFTMKKPLLLLFFLGTISLSLCEEERNADEDDGEKEVKRGIFALIKTAAKFVGKNLLKQAGKAGLEHLACKANNQC.

Positions M1–C22 are cleaved as a signal peptide. Positions E23–V37 are excised as a propeptide. Cysteines 70 and 76 form a disulfide.

The protein belongs to the frog skin active peptide (FSAP) family. Esculentin subfamily. In terms of tissue distribution, expressed by the skin glands.

The protein resides in the secreted. Its function is as follows. Antimicrobial peptide. The chain is Esculentin-2MT1 from Amolops mantzorum (Sichuan torrent frog).